The primary structure comprises 473 residues: Ribulose bisphosphate carboxylase large chain 1 (473 aa).

Substrate is bound by residues Asn-116 and Thr-166. Lys-168 acts as the Proton acceptor in catalysis. Lys-170 provides a ligand contact to substrate. Mg(2+) is bound by residues Lys-194, Asp-196, and Glu-197. The residue at position 194 (Lys-194) is an N6-carboxylysine. His-287 serves as the catalytic Proton acceptor. 3 residues coordinate substrate: Arg-288, His-320, and Ser-372.

Belongs to the RuBisCO large chain family. Type I subfamily. As to quaternary structure, heterohexadecamer of 8 large chains and 8 small chains. The cofactor is Mg(2+).

It catalyses the reaction 2 (2R)-3-phosphoglycerate + 2 H(+) = D-ribulose 1,5-bisphosphate + CO2 + H2O. The enzyme catalyses D-ribulose 1,5-bisphosphate + O2 = 2-phosphoglycolate + (2R)-3-phosphoglycerate + 2 H(+). Functionally, ruBisCO catalyzes two reactions: the carboxylation of D-ribulose 1,5-bisphosphate, the primary event in carbon dioxide fixation, as well as the oxidative fragmentation of the pentose substrate. Both reactions occur simultaneously and in competition at the same active site. This Nitrobacter winogradskyi (strain ATCC 25391 / DSM 10237 / CIP 104748 / NCIMB 11846 / Nb-255) protein is Ribulose bisphosphate carboxylase large chain 1.